The following is a 469-amino-acid chain: MAQLSKEASDLMARLNIKEPAKKASEDNDTTSETKVEKEDAKETKAEEPANKVINSEYEVKVNLADLQADANSPLYSVKSFEELGLSEELLKGLYAMKFQKPSKIQEKALPLLIRDPPHNMIAQSQSGTGKTAAFSLTMLTRVDPNVNSTQAICLSPARELARQTLEVIQEMGKFTKTSSQLVVPDSFERNKPITANIVVGTPGTVLDLIRRKMLNLGSIKVFVLDEADNMLDKQGLGDQCIRVKKFLPKTCQLVLFSATFDDGVRQYAKKIIPTAVSLELQKNEVNVSAIKQLFMDCDNEEHKYTILSELYGLLTIGSSIIFVKTKQTANLLYAKLKKEGHQVSILHGDLQSQDRDRLIDDFREGRSKVLITTNVLARGIDIPSVSMVVNYDLPTLPNGQADPSTYVHRIGRTGRFGRTGVAISFIHDKKSFEVLSAIQKYFGDIEITKVPTDDLDEMETIVKKALKA.

A disordered region spans residues Met1–Ala50. Positions Asn16–Ala50 are enriched in basic and acidic residues. The Q motif motif lies at Lys79–Glu107. Residues Leu112–Leu279 form the Helicase ATP-binding domain. Ser125–Thr132 serves as a coordination point for ATP. The DEAD box motif lies at Asp226–Asp229. The 170-residue stretch at Ala290–Met459 folds into the Helicase C-terminal domain.

It belongs to the DEAD box helicase family. DDX19/DBP5 subfamily. In terms of assembly, associates with the nuclear pore complex.

Its subcellular location is the cytoplasm. The protein localises to the nucleus. It localises to the nuclear pore complex. The protein resides in the nucleus membrane. It catalyses the reaction ATP + H2O = ADP + phosphate + H(+). In terms of biological role, ATP-dependent RNA helicase associated with the nuclear pore complex and essential for mRNA export from the nucleus. May participate in a terminal step of mRNA export through the removal of proteins that accompany mRNA through the nucleopore complex. May also be involved in early transcription. The protein is ATP-dependent RNA helicase DBP5 (DBP5) of Kluyveromyces lactis (strain ATCC 8585 / CBS 2359 / DSM 70799 / NBRC 1267 / NRRL Y-1140 / WM37) (Yeast).